A 673-amino-acid polypeptide reads, in one-letter code: UvrABC system protein C (673 aa).

Positions 16-95 (VEPGVYKFRD…IKEFDPRFNV (80 aa)) constitute a GIY-YIG domain. Residues 208-243 (DKMVRELERRMHAAAEDLDFETAARLRDDVQALRRA) form the UVR domain. Positions 488–526 (RDEAERDELDGTAAGAPLVDDDETPTSRPGIDPTTGRPR) are disordered.

It belongs to the UvrC family. Interacts with UvrB in an incision complex.

The protein resides in the cytoplasm. Functionally, the UvrABC repair system catalyzes the recognition and processing of DNA lesions. UvrC both incises the 5' and 3' sides of the lesion. The N-terminal half is responsible for the 3' incision and the C-terminal half is responsible for the 5' incision. The protein is UvrABC system protein C of Nocardia farcinica (strain IFM 10152).